The following is a 160-amino-acid chain: Ureidoglycolate lyase (160 aa).

The protein belongs to the ureidoglycolate lyase family. As to quaternary structure, homodimer. Ni(2+) serves as cofactor.

The catalysed reaction is (S)-ureidoglycolate = urea + glyoxylate. Its pathway is nitrogen metabolism; (S)-allantoin degradation. Its function is as follows. Catalyzes the catabolism of the allantoin degradation intermediate (S)-ureidoglycolate, generating urea and glyoxylate. Involved in the utilization of allantoin as nitrogen source. The chain is Ureidoglycolate lyase from Salmonella gallinarum (strain 287/91 / NCTC 13346).